The chain runs to 191 residues: Pyridoxal 5'-phosphate synthase subunit PdxT (191 aa).

52–54 (GES) lines the L-glutamine pocket. The Nucleophile role is filled by cysteine 81. Residues arginine 108 and 136-137 (IR) contribute to the L-glutamine site. Residues histidine 172 and glutamate 174 each act as charge relay system in the active site.

The protein belongs to the glutaminase PdxT/SNO family. In the presence of PdxS, forms a dodecamer of heterodimers. Only shows activity in the heterodimer.

The enzyme catalyses aldehydo-D-ribose 5-phosphate + D-glyceraldehyde 3-phosphate + L-glutamine = pyridoxal 5'-phosphate + L-glutamate + phosphate + 3 H2O + H(+). The catalysed reaction is L-glutamine + H2O = L-glutamate + NH4(+). It functions in the pathway cofactor biosynthesis; pyridoxal 5'-phosphate biosynthesis. Catalyzes the hydrolysis of glutamine to glutamate and ammonia as part of the biosynthesis of pyridoxal 5'-phosphate. The resulting ammonia molecule is channeled to the active site of PdxS. This chain is Pyridoxal 5'-phosphate synthase subunit PdxT, found in Actinobacillus pleuropneumoniae serotype 7 (strain AP76).